A 409-amino-acid chain; its full sequence is Salivary endonuclease (409 aa).

A signal peptide spans 1-20 (MHLQLNLCAILLSVLNGIQG). 2 N-linked (GlcNAc...) asparagine glycosylation sites follow: Asn-37 and Asn-102. His-216 acts as the Proton acceptor in catalysis. Residue Asn-246 coordinates Mg(2+). N-linked (GlcNAc...) asparagine glycosylation is found at Asn-351 and Asn-381.

This sequence belongs to the DNA/RNA non-specific endonuclease family. It depends on Mg(2+) as a cofactor. Salivary gland.

The protein resides in the secreted. Hydrolyzes single-stranded and double-stranded DNA with little sequence specificity. Inhibits contact pathway of blood coagulation in the host by preventing activation of coagulation factor XII (F12) triggered by soluble DNA. Modestly up-regulates expression of CSF2, CXCL1 and CXCL8 in cultured human dermal microvascular endothelial cells. At higher doses promotes host neutrophil recruitment at the injection site in mouse model. Its function is as follows. (Microbial infection) Increases Leishmania major survival in the host by disrupting parasite-induced neutrophil extracellular traps. Exacerbates L.major parasite infectivity and increases cutaneous lesions in mouse model. The chain is Salivary endonuclease from Lutzomyia longipalpis (Sand fly).